We begin with the raw amino-acid sequence, 410 residues long: MEAYIRQKRATPGMVQASDMQLVRPMSAVNRNGREVHAYDGPMQFMMSPNNPDQILTSTGNASITTTPTSPYSDAPLEKLTPSSQDSEDEESTPVDILPSSNSFDSTRHSADHLLTHSAPISPALMNNNGGSHHDSSSGKSVEHSSPQASGHNDTEGDVVGPIEQWVTQPAPQGVLYKCRITRDRKGMDRGLFPIYYLHLERDYGKKVFCLAGRKRKKSKTSNYIISCDPTDLSRQADGFVGKLRSNVFGTTFFVYDSGKKEDHGNPRLDLAVVIYDTNILGFKGPRNMTVLLPGMTEDDQRVKISSADGQQGLLDSWKSKNMDNVVELHNKTPIWNDETQSYVLNFHGRVTQASVKNFQLVHDSDPDYIVMQFGRTSDDIFTMDFRYPLCAFQAFAIALSSFDGKLACE.

Residues 48 to 72 are compositionally biased toward polar residues; sequence SPNNPDQILTSTGNASITTTPTSPY. Disordered regions lie at residues 48 to 109 and 121 to 159; these read SPNN…STRH and ISPALMNNNGGSHHDSSSGKSVEHSSPQASGHNDTEGDV. Residues 132 to 143 show a composition bias toward basic and acidic residues; the sequence is SHHDSSSGKSVE.

The protein belongs to the TUB family.

Its subcellular location is the cytoplasm. The protein localises to the nucleus. This chain is Protein king tubby 2 (king-tubby2), found in Aedes aegypti (Yellowfever mosquito).